Here is a 1374-residue protein sequence, read N- to C-terminus: MAQQTFTGRKRVRKFFGHIREVAEMPNLIEVQKASYDQFLMVAEPPGGRPDEGLQAVFRSVFPISDFSNASMLEFVRYEFEPPKYDVDECRQRGMTYAAPLKVTLRLIVFDIDEETGARSVKDIKEQDVYMGDIPLMTMNGTFIVNGTERVIVSQMHRSPGVFFDHDKGKTHSSGKLLFAARIIPYRGSWLDIEFDAKDIVYARIDRRRKLPVTSLMFALGLDGEEILSTFYNKILYKRTKEGWRVPFDVNRFRGYSTVNDLIDADTGKVVLEAGKKLTVRAARQLQEKGLKALRMSDEELVGNYLAEDLVNPKTGEIYAEAGEEITDKTLKMLNEQGYKELPLLDIDHVNVGPYIRNTLNADKNMTREDALFDIYRVMRPGEPPTLDSAQNMFQSLFFDAERYDLSAVGRVKMNMRLDLDAPDTHRTLRKEDILAVIKTLVGLRDGKGEIDDIDHLGNRRVRSVGELMENQYRIGLLRMERAIKERMSSVDIDTVMPQDLINAKPAAAAVREFFGSSQLSQFMDQTNPLSEITHKRRLSALGPGGLTRERAGFEVRDVHPTHYGRICPIETPEGPNIGLINSLATFARVNKYGFVETPYRKVKEGRVTDEVVYLSAMEEGRYAVAQANVSLDAKGKFTDDLVVCRAGGTRDVVPMPADQVDYMDVSPKQLVSVAAALIPFLENDDANRALMGSNMQRQAVPLVRAEAPFVGTGMEGVVARDSGAAIAARRTGIIDQIDATRIVIRATEDLDPTKSGVDIYRLMKYQRSNQSTCINQRPLVKVGDHVKKGDIIADGPSTDLGELALGRNVLVAFMPWNGYNFEDSILLSERIVKEDVFTSIHIEEFEVMARDTKLGPEEITRDIPNVSEEALKNLDEAGIVYIGAEVRAGDILVGKITPKGESPMTPEEKLLRAIFGEKASDVRDTSLRVPPGVQGTIVEVRVFNRHGVDKDERALAIEREEIERLAKDRDDEQAILDRNVYGRLADLLDGRQGIAGPKGFKKDTKITRAVLEEYPKSQWWLFAAPNDKLMAEIEAMRKQYDESKKGLEQRFLDKVEKLQRGDELPPGVMKMVKVFVAVKRKIQPGDKMAGRHGNKGVVSKIVPIEDMPFLEDGTHADIVLNPLGVPSRMNVGQILETHLGWACAGLGKRIGETIDAYYQSQDLKPLRETLRKIYGEDETIKSLDDGELLELGRNLSHGVPIATPVFDGAKEADIEEMLKLAGFDASGQSTVYDGRTGDQFDRRVTVGYIYMLKLHHLVDDKIHARSIGPYSLVTQQPLGGKAQFGGQRFGEMEVWALEAYGAAYTLQEMLTVKSDDVAGRTKVYEAIVRGDDTFEAGIPESFNVLVKEMRSLGLNVDLHNSKLAAPPPAEAAE.

This sequence belongs to the RNA polymerase beta chain family. The RNAP catalytic core consists of 2 alpha, 1 beta, 1 beta' and 1 omega subunit. When a sigma factor is associated with the core the holoenzyme is formed, which can initiate transcription.

The catalysed reaction is RNA(n) + a ribonucleoside 5'-triphosphate = RNA(n+1) + diphosphate. Its function is as follows. DNA-dependent RNA polymerase catalyzes the transcription of DNA into RNA using the four ribonucleoside triphosphates as substrates. This Rhodopseudomonas palustris (strain TIE-1) protein is DNA-directed RNA polymerase subunit beta.